We begin with the raw amino-acid sequence, 160 residues long: Small ribosomal subunit protein uS19 (160 aa).

The protein belongs to the universal ribosomal protein uS19 family.

Functionally, protein S19 forms a complex with S13 that binds strongly to the 16S ribosomal RNA. In Pyrobaculum islandicum (strain DSM 4184 / JCM 9189 / GEO3), this protein is Small ribosomal subunit protein uS19.